A 502-amino-acid polypeptide reads, in one-letter code: MKYLTKSRVIATIAMLGCLSVSAWAETPTNQPESLTDKALKHEKLGVVVESANHKFAEKYRLQYDSWKATAESTDRSSALEADPRLVVLWAGYAFAKEYNKPRGHYYAVTDVREILRTGAPKDENDGPQPMACWTCKGPDVPRLIEEKGERGYFDPKWAKYGAEIVNSIGCADCHDTTSKAFEEGKPALRVARPHVLRALESVGWRFEDLDKHGKRVAVCSNCHVEYYFKDKKDVTFPWAKGVDVDSIEKYYDESQFTDWTHALSKAPMLKTQHPDFEVWSQGVHGKNGVTCIDCHMPKVKDKDGKVYTEHKIGNPFDRFDATCKTCHEQSKQTLQDRVKEHKAQVKEAMIRLEDQIVKAHFEAKVAWDAGATAEEMQDILMAIRHAQWRWDYSAAGHGNHFHAPDVMLHTIATGLDRVADARAKLGVVLTKHGVETPIVMPDISTREKAQKAVGIDIAKDQAAKDEFLRTVVPQWERQARERGLLPEVTPKSVTTPKVDAK.

The first 25 residues, methionine 1 to alanine 25, serve as a signal peptide directing secretion. Histidine 105 serves as a coordination point for heme c. Residues cysteine 133, cysteine 136, and lysine 137 each coordinate heme. Heme c-binding residues include cysteine 171, cysteine 174, histidine 175, cysteine 220, cysteine 223, and histidine 224. Residues glutamate 226, tyrosine 227, lysine 271, and glutamine 273 each coordinate Ca(2+). Position 227 (tyrosine 227) interacts with substrate. Position 274 (histidine 274) interacts with substrate. 9 residues coordinate heme c: histidine 285, cysteine 292, cysteine 295, histidine 296, histidine 311, cysteine 324, cysteine 327, histidine 328, and histidine 403. The disordered stretch occupies residues arginine 481–lysine 502.

Belongs to the cytochrome c-552 family. It depends on Ca(2+) as a cofactor. Heme c is required as a cofactor.

The protein resides in the periplasm. It carries out the reaction 6 Fe(III)-[cytochrome c] + NH4(+) + 2 H2O = 6 Fe(II)-[cytochrome c] + nitrite + 8 H(+). It functions in the pathway nitrogen metabolism; nitrate reduction (assimilation). Its function is as follows. Catalyzes the reduction of nitrite to ammonia, consuming six electrons in the process. In Haemophilus ducreyi (strain 35000HP / ATCC 700724), this protein is Cytochrome c-552.